Consider the following 404-residue polypeptide: Serine/threonine transporter SstT (404 aa).

The next 9 helical transmembrane spans lie at 17–37 (IGIG…VTAI), 44–64 (FVGA…VQAI), 75–95 (ITLI…VAVI), 138–158 (ALAT…GLAL), 179–199 (IVVW…FSTV), 212–232 (LLIL…NPLL), 287–307 (IPLG…VLTL), 319–339 (FLTA…ASGV), and 354–374 (FGIS…VGVI).

The protein belongs to the dicarboxylate/amino acid:cation symporter (DAACS) (TC 2.A.23) family.

The protein localises to the cell membrane. It catalyses the reaction L-serine(in) + Na(+)(in) = L-serine(out) + Na(+)(out). The enzyme catalyses L-threonine(in) + Na(+)(in) = L-threonine(out) + Na(+)(out). Involved in the import of serine and threonine into the cell, with the concomitant import of sodium (symport system). The sequence is that of Serine/threonine transporter SstT from Streptococcus equi subsp. zooepidemicus (strain MGCS10565).